A 147-amino-acid chain; its full sequence is UPAR/Ly6 domain-containing protein CG9338 (147 aa).

Positions 1-23 (MVSSVKMILALTVLATVACTGYA) are cleaved as a signal peptide. Topologically, residues 24-126 (IKCYQCDSLT…VCTEDECNGT (103 aa)) are extracellular. 5 disulfides stabilise this stretch: Cys-26-Cys-72, Cys-29-Cys-37, Cys-51-Cys-89, Cys-101-Cys-115, and Cys-118-Cys-123. An N-linked (GlcNAc...) asparagine glycan is attached at Asn-68. Asn-124 carries GPI-anchor amidated asparagine lipidation. Residues 125–147 (GTSSLAPIAGVILLFFGLARLLA) constitute a propeptide, removed in mature form. The chain crosses the membrane as a helical span at residues 127 to 147 (SSLAPIAGVILLFFGLARLLA).

This sequence belongs to the quiver family.

The protein resides in the cell membrane. Its function is as follows. May be involved in regulating neuron excitability. This chain is UPAR/Ly6 domain-containing protein CG9338, found in Drosophila melanogaster (Fruit fly).